The primary structure comprises 402 residues: Nicotinate phosphoribosyltransferase (402 aa).

Position 224 is a phosphohistidine; by autocatalysis (histidine 224).

This sequence belongs to the NAPRTase family. In terms of processing, transiently phosphorylated on a His residue during the reaction cycle. Phosphorylation strongly increases the affinity for substrates and increases the rate of nicotinate D-ribonucleotide production. Dephosphorylation regenerates the low-affinity form of the enzyme, leading to product release.

It carries out the reaction nicotinate + 5-phospho-alpha-D-ribose 1-diphosphate + ATP + H2O = nicotinate beta-D-ribonucleotide + ADP + phosphate + diphosphate. Its pathway is cofactor biosynthesis; NAD(+) biosynthesis; nicotinate D-ribonucleotide from nicotinate: step 1/1. Its function is as follows. Catalyzes the synthesis of beta-nicotinate D-ribonucleotide from nicotinate and 5-phospho-D-ribose 1-phosphate at the expense of ATP. The protein is Nicotinate phosphoribosyltransferase of Neisseria meningitidis serogroup B (strain ATCC BAA-335 / MC58).